Consider the following 304-residue polypeptide: GS homeobox 2 (304 aa).

A disordered region spans residues A116–A151. Residues N123–Q140 show a composition bias toward basic residues. A compositionally biased stretch (low complexity) spans P141–A151. Positions G202–G261 form a DNA-binding region, homeobox. The segment at R283–L304 is disordered.

It belongs to the Antp homeobox family.

Its subcellular location is the nucleus. It is found in the cytoplasm. Transcription factor that binds 5'-CNAATTAG-3' DNA sequence and regulates the expression of numerous genes including genes important for brain development. During telencephalic development, causes ventralization of pallial progenitors and, depending on the developmental stage, specifies different neuronal fates. At early stages, necessary and sufficient to correctly specify the ventral lateral ganglionic eminence (LGE) and its major derivatives, the striatal projection neurons. At later stages, may specify LGE progenitors toward dorsal LGE fates, including olfactory bulb interneurons. This is GS homeobox 2 (GSX2) from Homo sapiens (Human).